The following is a 106-amino-acid chain: uncharacterized protein (106 aa).

Residues 1-31 (MNNERLMLKGIFLGAAAGAALSLLHKPTRQA) form the signal peptide. A coiled-coil region spans residues 57–89 (VITKVDEAKKLARTLSKEVDFVNQQVKELKKTT).

This is an uncharacterized protein from Bacillus subtilis (strain 168).